The chain runs to 345 residues: Cytoskeleton protein RodZ (345 aa).

The Cytoplasmic portion of the chain corresponds to 1–111 (MNTEASQDQT…LGKKHKKRDG (111 aa)). Residues 19-79 (LRQARESLGL…KLVHLPEDEL (61 aa)) enclose the HTH cro/C1-type domain. Positions 30-49 (QQTVAERLCLKVSTIRDIEE) form a DNA-binding region, H-T-H motif. The helical; Signal-anchor for type II membrane protein transmembrane segment at 112–132 (WLMSFTWLIVLVVLGLTGAWW) threads the bilayer. Topologically, residues 133 to 345 (WQNHQAQQAE…RVARLTVCVE (213 aa)) are periplasmic. Residues 151 to 259 (SAQLSQNGGQ…PLPTADAGVS (109 aa)) are disordered. The segment covering 188-225 (PLTNHSGSAITNSATTSSVPKTTSTEPVDTANTNTTMH) has biased composition (polar residues). The segment covering 229–241 (AASAAVSPSQVPQ) has biased composition (low complexity).

This sequence belongs to the RodZ family.

The protein localises to the cell inner membrane. Its function is as follows. Cytoskeletal protein that is involved in cell-shape control through regulation of the length of the long axis. The protein is Cytoskeleton protein RodZ of Yersinia pestis bv. Antiqua (strain Antiqua).